Here is a 619-residue protein sequence, read N- to C-terminus: Alpha-(1,6)-fucosyltransferase (619 aa).

Topologically, residues 1–17 are cytoplasmic; sequence MLLVRQLFGASANSWAR. A helical; Signal-anchor for type II membrane protein transmembrane segment spans residues 18–38; that stretch reads ALIIFVLAWIGLVYVFVVKLT. Residues 39-619 lie on the Lumenal side of the membrane; sequence NTQGQQAAGE…TAKLPLYAGI (581 aa). Intrachain disulfides connect C253-C315, C261-C279, and C267-C271. The GT23 domain occupies 255 to 539; that stretch reads NARKLVCKLN…PDAAHRFKSL (285 aa). The SH3-binding motif lies at 345–351; it reads PRPPYLP. The tract at residues 411–412 is important for donor substrate binding; sequence RR. C511 and C518 are joined by a disulfide. The 62-residue stretch at 548-609 folds into the SH3 domain; sequence QNAHNRRVVI…PSFKVEEKVD (62 aa).

This sequence belongs to the glycosyltransferase 23 family. The cofactor is Mn(2+). Requires Mg(2+) as cofactor.

It localises to the golgi apparatus. The protein resides in the golgi stack membrane. It carries out the reaction N(4)-{beta-D-GlcNAc-(1-&gt;2)-alpha-D-Man-(1-&gt;3)-[beta-D-GlcNAc-(1-&gt;2)-alpha-D-Man-(1-&gt;6)]-beta-D-Man-(1-&gt;4)-beta-D-GlcNAc-(1-&gt;4)-beta-D-GlcNAc}-L-asparaginyl-[protein] + GDP-beta-L-fucose = an N(4)-{beta-D-GlcNAc-(1-&gt;2)-alpha-D-Man-(1-&gt;3)-[beta-D-GlcNAc-(1-&gt;2)-alpha-D-Man-(1-&gt;6)]-beta-D-Man-(1-&gt;4)-beta-D-GlcNAc-(1-&gt;4)-[alpha-L-Fuc-(1-&gt;6)]-beta-D-GlcNAc}-L-asparaginyl-[protein] + GDP + H(+). It functions in the pathway protein modification; protein glycosylation. Functionally, catalyzes the addition of fucose in alpha 1-6 linkage to the first GlcNAc residue, next to the peptide chains in N-glycans. The addition is prevented if the GlcNAc residue is already fucosylated. This Drosophila melanogaster (Fruit fly) protein is Alpha-(1,6)-fucosyltransferase (FucT6).